The chain runs to 426 residues: Enolase (426 aa).

Residue glutamine 165 coordinates (2R)-2-phosphoglycerate. Glutamate 209 (proton donor) is an active-site residue. Residues aspartate 244, glutamate 287, and aspartate 313 each contribute to the Mg(2+) site. (2R)-2-phosphoglycerate-binding residues include lysine 338, arginine 367, serine 368, and lysine 389. The Proton acceptor role is filled by lysine 338.

This sequence belongs to the enolase family. Mg(2+) is required as a cofactor.

It is found in the cytoplasm. The protein resides in the secreted. It localises to the cell surface. It carries out the reaction (2R)-2-phosphoglycerate = phosphoenolpyruvate + H2O. Its pathway is carbohydrate degradation; glycolysis; pyruvate from D-glyceraldehyde 3-phosphate: step 4/5. Catalyzes the reversible conversion of 2-phosphoglycerate (2-PG) into phosphoenolpyruvate (PEP). It is essential for the degradation of carbohydrates via glycolysis. The sequence is that of Enolase from Methanococcus maripaludis (strain DSM 14266 / JCM 13030 / NBRC 101832 / S2 / LL).